Here is a 439-residue protein sequence, read N- to C-terminus: Cysteine--tRNA ligase (439 aa).

Cysteine 28 provides a ligand contact to Zn(2+). Residues 30–40 (ITVYDLCHIGH) carry the 'HIGH' region motif. Zn(2+)-binding residues include cysteine 209, histidine 234, and glutamate 238. The 'KMSKS' region motif lies at 266–270 (KMSKS). ATP is bound at residue lysine 269.

This sequence belongs to the class-I aminoacyl-tRNA synthetase family. As to quaternary structure, monomer. Zn(2+) serves as cofactor.

It localises to the cytoplasm. The enzyme catalyses tRNA(Cys) + L-cysteine + ATP = L-cysteinyl-tRNA(Cys) + AMP + diphosphate. In Shigella boydii serotype 4 (strain Sb227), this protein is Cysteine--tRNA ligase.